The chain runs to 121 residues: Large ribosomal subunit protein bL19 (121 aa).

This sequence belongs to the bacterial ribosomal protein bL19 family.

Its function is as follows. This protein is located at the 30S-50S ribosomal subunit interface and may play a role in the structure and function of the aminoacyl-tRNA binding site. The protein is Large ribosomal subunit protein bL19 (rplS) of Chlamydia muridarum (strain MoPn / Nigg).